The chain runs to 162 residues: Caveolin-2 (162 aa).

Residues 1–86 lie on the Cytoplasmic side of the membrane; that stretch reads MGLETEKADV…FEISKYVMYK (86 aa). Tyrosine 19 bears the Phosphotyrosine; by SRC mark. A phosphoserine mark is found at serine 20 and serine 23. Residue tyrosine 27 is modified to Phosphotyrosine; by SRC. A Phosphoserine modification is found at serine 36. The helical intramembrane region spans 87 to 107; sequence FLTVFLAIPLAFIAGILFATL. The Cytoplasmic segment spans residues 108–162; sequence SCLHIWILMPFVKTCLMVLPSVQTIWKSVTDVIIAPLCTSVGRCFSSVSLQLSQD.

The protein belongs to the caveolin family. As to quaternary structure, monomer or homodimer. Interacts with CAV1; the interaction forms a stable heterooligomeric complex that is required for targeting to lipid rafts and for caveolae formation. Tyrosine phosphorylated forms do not form heterooligomers with the Tyr-19-phosphorylated form existing as a monomer or dimer, and the Tyr-27-form as a monomer only. Interacts (tyrosine phosphorylated form) with the SH2 domain-containing proteins, RASA1, NCK1 and SRC. Interacts (tyrosine phosphorylated form) with INSR, the interaction (Tyr-27-phosphorylated form) is increased on insulin stimulation. Interacts (Tyr-19 phosphorylated form) with MAPK1 (phosphorylated form); the interaction, promoted by insulin, leads to nuclear location and MAPK1 activation. Interacts with STAT3; the interaction is increased on insulin-induced tyrosine phosphorylation leading to STAT activation. In terms of processing, phosphorylated on serine and tyrosine residues. CAV1 promotes phosphorylation on Ser-23 which then targets the complex to the plasma membrane, lipid rafts and caveolae. Phosphorylation on Ser-36 appears to modulate mitosis in endothelial cells. Phosphorylation on both Tyr-19 and Tyr-27 is required for insulin-induced 'Ser-727' phosphorylation of STAT3 and its activation. Phosphorylation on Tyr-19 is required for insulin-induced phosphorylation of MAPK1 and DNA binding of STAT3. Tyrosine phosphorylation is induced by both EGF and insulin (By. similarity).

It localises to the nucleus. The protein localises to the cytoplasm. Its subcellular location is the golgi apparatus membrane. It is found in the cell membrane. The protein resides in the membrane. It localises to the caveola. Its function is as follows. May act as a scaffolding protein within caveolar membranes. Interacts directly with G-protein alpha subunits and can functionally regulate their activity. Acts as an accessory protein in conjunction with CAV1 in targeting to lipid rafts and driving caveolae formation. The Ser-36 phosphorylated form has a role in modulating mitosis in endothelial cells. Positive regulator of cellular mitogenesis of the MAPK signaling pathway. Required for the insulin-stimulated nuclear translocation and activation of MAPK1 and STAT3, and the subsequent regulation of cell cycle progression. This Pan troglodytes (Chimpanzee) protein is Caveolin-2 (CAV2).